Reading from the N-terminus, the 169-residue chain is E1B protein, small T-antigen (169 aa).

A disordered region spans residues 147–169 (GSVVEEEQGEEHLARDSDDPFFD). Basic and acidic residues predominate over residues 156–169 (EEHLARDSDDPFFD).

It belongs to the adenoviridae E1B 19 kDa protein family.

This is E1B protein, small T-antigen from Canine adenovirus serotype 1 (strain Glaxo) (CAdV-1).